Consider the following 886-residue polypeptide: General transcription factor 3C polypeptide 3 (886 aa).

Positions 1-121 (MSGFSPELID…TPEQPTAGDV (121 aa)) are disordered. At serine 2 the chain carries N-acetylserine. Over residues 12–44 (LEGKISFEEFERRREERKTREKKSLQEKGKLSA) the composition is skewed to basic and acidic residues. Serine 43 bears the Phosphoserine mark. Residues 53 to 63 (VPSSSGINSTK) show a composition bias toward polar residues. Positions 92-113 (ENEDDEEEEEEEEEEEEEEETP) are enriched in acidic residues. TPR repeat units lie at residues 149–182 (LRGLMGEANIRFARGEREEAILMCMEIIRQAPLA), 183–216 (YEPFSTLAMIYEDQGDMEKSLQFELIAAHLNPSD), 217–250 (TEEWVRLAEMSLEQDNIKQAIFCYTKALKYEPTN), 252–284 (RYLWERSSLYEQMGDHKMAMDGYRRILNLLSPS), 290–323 (MQLARDMAKSYYEANDVTSAINIIDEAFSKHQGL), 326–361 (MEDVNIAAELYISNKQYDKALEIITDFSGIVLEKKT), 421–454 (GDLYLDVAEAFLDVGEYNSALPLLSALVCSERYN), 456–489 (AVVWLRHAECLKALGYMERAAESYGKVVDLAPLH), 491–523 (DARISLSTLQQQLGQPEKALEALEPMYDPDTLA), 733–766 (HALCVLNGHNAFVSGSFKHALGQYVQAFRTHPDE), and 811–844 (QESFYNLGRGLHQLGLIHLAIHYYQKALELPPLV). Serine 282 carries the post-translational modification Phosphoserine.

In terms of assembly, part of the TFIIIC subcomplex TFIIIC2, consisting of six subunits, GTF3C1, GTF3C2, GTF3C3, GTF3C4, GTF3C5 and GTF3C6. Interacts with BRF1 and TBP.

Its subcellular location is the nucleus. Involved in RNA polymerase III-mediated transcription. Integral, tightly associated component of the DNA-binding TFIIIC2 subcomplex that directly binds tRNA and virus-associated RNA promoters. This chain is General transcription factor 3C polypeptide 3 (GTF3C3), found in Homo sapiens (Human).